Reading from the N-terminus, the 295-residue chain is Nucleotide-binding protein EF_0766 (295 aa).

12 to 19 (GMSGAGKT) lines the ATP pocket. Residue 62–65 (DLRS) coordinates GTP.

It belongs to the RapZ-like family.

Displays ATPase and GTPase activities. This chain is Nucleotide-binding protein EF_0766, found in Enterococcus faecalis (strain ATCC 700802 / V583).